A 207-amino-acid chain; its full sequence is V-type ATP synthase subunit D (207 aa).

The protein belongs to the V-ATPase D subunit family.

Functionally, produces ATP from ADP in the presence of a proton gradient across the membrane. The chain is V-type ATP synthase subunit D from Streptococcus gordonii (strain Challis / ATCC 35105 / BCRC 15272 / CH1 / DL1 / V288).